A 327-amino-acid chain; its full sequence is Small ribosomal subunit protein uS2 (327 aa).

A disordered region spans residues 258-327 (AGHTPVSETL…PGVADGAALE (70 aa)).

The protein belongs to the universal ribosomal protein uS2 family.

In Anaplasma marginale (strain St. Maries), this protein is Small ribosomal subunit protein uS2.